The sequence spans 434 residues: Trigger factor (434 aa).

The PPIase FKBP-type domain occupies lysine 161–proline 246.

The protein belongs to the FKBP-type PPIase family. Tig subfamily.

It is found in the cytoplasm. The catalysed reaction is [protein]-peptidylproline (omega=180) = [protein]-peptidylproline (omega=0). Its function is as follows. Involved in protein export. Acts as a chaperone by maintaining the newly synthesized protein in an open conformation. Functions as a peptidyl-prolyl cis-trans isomerase. The sequence is that of Trigger factor from Marinobacter nauticus (strain ATCC 700491 / DSM 11845 / VT8) (Marinobacter aquaeolei).